Here is a 995-residue protein sequence, read N- to C-terminus: MGMRPTARMPKLTRRSRVLILIALGVIALLLAGPRLIDAYVDWLWFGELGYRSVFTTVLVTRFLVFLVAGVLVGGIVFAGLALAYRTRPVFVPNNDNDPVARYRTVVLARLRLFGIGIPAAIGLLAGIVAQSYWVRIQLFLHGGDFGITDPQFGKDLGFYAFELPFYRLLLSYLFVAIFLAFVANVVSHYLFGGIRLTGRSGALSRSARIQLVSLVGVLVLLKAVAYWLDRYELLSHTRGGKPFTGAGYTDINAVLPAKLILMAIAVICAAAVFSAIVLRDLRIPAIGLVLLLLSSLIVGAAWPMIVEQISVKPNAAQKESEYISRSITATRQAYGLTSNVVTYRNYTGDGEATAQQVAADRATTSNIRLLDPTIVSPAFTQFQQGKNFYYFPDQLSIDRYFDRNNNLRDYVVAARELNPDRLIDNQRDWINRHTVYTHGNGFIASPANTVRGIANDPNQNGGYPEFLVNVVGANGTVVSDGPAPLDQPRIYYGPVISNTPADYAIVGKTGADREYDYETSADTKNYTYTGSGGVSVGSWISRTVFAAKFAERNFLFSNVIGSNSKILFNRDPAQRVEAVAPWLTTDSAVYPAIVNKRMVWILDGYTTLDNYPYSQLTSLSSATADSNEVAFNRLLPDKQVSYIRNSVKATVDAYDGTVTLYQQDEQDPVLKAWMQVFPGTVKPKGDISPELAAHLRYPEDLFKVQRMLLAKYHVNDPVTFFSTSDFWDVPLDPNPTASSYQPPYYIVAKNIAKNDNSASYQLISAMNRFKRDYLAAYISASSDPATYGKITVLTIPGQVNGPKLANNAITTDPAVSQDLGVIGRDNQNRIRWGNLLTLPVGQGGLLYVEPVYASPGASDAASSYPRLIRVAMMYNDKIGYGPTVRDALNGLFGPGAGDAATGIQPTEGGAPANVPPNNAPSPEALPGTPPSPPTAVPPAPEASVTLSPAKAAAMKEIQSAIGAARDAQKKGDFAAYGAALQRLDDAITKFNNTQ.

The next 7 membrane-spanning stretches (helical) occupy residues 18–38 (VLIL…RLID), 63–83 (FLVF…GLAL), 113–133 (LFGI…AQSY), 175–195 (FVAI…FGGI), 210–230 (IQLV…YWLD), 259–279 (KLIL…AIVL), and 287–307 (IGLV…PMIV). The interval 900–948 (AATGIQPTEGGAPANVPPNNAPSPEALPGTPPSPPTAVPPAPEASVTLS) is disordered. A compositionally biased stretch (pro residues) spans 928–941 (GTPPSPPTAVPPAP).

It belongs to the UPF0182 family.

It localises to the cell membrane. The polypeptide is UPF0182 protein MMAR_1371 (Mycobacterium marinum (strain ATCC BAA-535 / M)).